A 65-amino-acid polypeptide reads, in one-letter code: Large ribosomal subunit protein bL35 (65 aa).

It belongs to the bacterial ribosomal protein bL35 family.

This is Large ribosomal subunit protein bL35 from Synechococcus sp. (strain CC9311).